The chain runs to 116 residues: Movement protein TGB2 (116 aa).

Residues 1-11 (MPLTPPPNPQK) lie on the Cytoplasmic side of the membrane. Residues 12–32 (TYQIAILALGLVLLAFVLISD) form a helical membrane-spanning segment. At 33–77 (HSPKVGDHLHNLPFGGEYKDGTKSIKYFQRPNQHSLSKTLAKSHN) the chain is on the lumenal side. A helical transmembrane segment spans residues 78–98 (TTIFLLILGLIVTLHGLHYFN). Over 99 to 116 (NNRRVSSSLHCVLCQNKH) the chain is Cytoplasmic.

The protein belongs to the Tymovirales TGBp2 protein family.

The protein localises to the host endoplasmic reticulum membrane. Its function is as follows. Plays a role in viral cell-to-cell propagation, by facilitating genome transport to neighboring plant cells through plasmosdesmata,. This chain is Movement protein TGB2, found in White clover mosaic virus (strain M) (WCMV).